A 382-amino-acid polypeptide reads, in one-letter code: Homoserine O-acetyltransferase (382 aa).

The AB hydrolase-1 domain maps to 52 to 356; sequence NVVMVLHALT…TYGHDGFLVE (305 aa). Residue Ser-157 is the Nucleophile of the active site. Residue Arg-227 coordinates substrate. Residues Asp-320 and His-350 contribute to the active site. Asp-351 contacts substrate.

Belongs to the AB hydrolase superfamily. MetX family. In terms of assembly, homodimer.

Its subcellular location is the cytoplasm. It catalyses the reaction L-homoserine + acetyl-CoA = O-acetyl-L-homoserine + CoA. It participates in amino-acid biosynthesis; L-methionine biosynthesis via de novo pathway; O-acetyl-L-homoserine from L-homoserine: step 1/1. Transfers an acetyl group from acetyl-CoA to L-homoserine, forming acetyl-L-homoserine. This Mycobacterium leprae (strain TN) protein is Homoserine O-acetyltransferase.